The following is a 191-amino-acid chain: Peptidyl-tRNA hydrolase (191 aa).

TRNA is bound at residue Y17. The Proton acceptor role is filled by H22. The tRNA site is built by Y68, N70, and N116.

This sequence belongs to the PTH family. In terms of assembly, monomer.

The protein resides in the cytoplasm. The enzyme catalyses an N-acyl-L-alpha-aminoacyl-tRNA + H2O = an N-acyl-L-amino acid + a tRNA + H(+). Its function is as follows. Hydrolyzes ribosome-free peptidyl-tRNAs (with 1 or more amino acids incorporated), which drop off the ribosome during protein synthesis, or as a result of ribosome stalling. In terms of biological role, catalyzes the release of premature peptidyl moieties from peptidyl-tRNA molecules trapped in stalled 50S ribosomal subunits, and thus maintains levels of free tRNAs and 50S ribosomes. The polypeptide is Peptidyl-tRNA hydrolase (Mycobacterium tuberculosis (strain ATCC 25177 / H37Ra)).